We begin with the raw amino-acid sequence, 391 residues long: Cdc42 effector protein 1 (391 aa).

A phosphoserine mark is found at Ser19 and Ser27. Residue Thr34 is modified to Phosphothreonine. Residues 38–52 (ISHPLGDFRHTMHVG) form the CRIB domain. At Ser39 the chain carries Phosphoserine. Position 53 is an omega-N-methylarginine (Arg53). Residues Ser65, Ser73, Ser77, Ser101, Ser113, Ser121, and Ser139 each carry the phosphoserine modification. The tract at residues 163–189 (ISRLPRSEKPHDRDRDGSFPSEPGLRR) is disordered. The span at 167 to 179 (PRSEKPHDRDRDG) shows a compositional bias: basic and acidic residues. Residues Ser180, Ser190, Ser192, and Ser195 each carry the phosphoserine modification. 8 consecutive repeat copies span residues 220–226 (PAAETPA), 227–233 (PAANPPA), 234–240 (PTANPTG), 241–247 (PAANPPA), 248–254 (TTANPPA), 255–261 (PAANPSA), 262–268 (PAATPTG), and 269–275 (PAANPPA). The interval 220–275 (PAAETPAPAANPPAPTANPTGPAANPPATTANPPAPAANPSAPAATPTGPAANPPA) is 8 X 7 AA tandem repeats of [PT]-[AT]-A-[ENT]-[PT]-[PTS]-[AG]. A disordered region spans residues 221–338 (AAETPAPAAN…HHYPEMDARQ (118 aa)). Over residues 236-270 (ANPTGPAANPPATTANPPAPAANPSAPAATPTGPA) the composition is skewed to low complexity. A Phosphoserine modification is found at Ser303. Over residues 327–338 (GGHHYPEMDARQ) the composition is skewed to basic and acidic residues. Phosphoserine occurs at positions 350 and 353. A disordered region spans residues 354 to 391 (LDEEWRAPQAGSRTPVPSTVQANTFEFADAEEDDEVKV). Residues 364 to 377 (GSRTPVPSTVQANT) show a composition bias toward polar residues. Over residues 381–391 (ADAEEDDEVKV) the composition is skewed to acidic residues.

This sequence belongs to the BORG/CEP family. Interacts with RHOQ and CDC42, in a GTP-dependent manner. As to expression, endothelial and bone marrow stromal cells.

It localises to the endomembrane system. The protein localises to the cytoplasm. It is found in the cytoskeleton. In terms of biological role, probably involved in the organization of the actin cytoskeleton. Induced membrane extensions in fibroblasts. This chain is Cdc42 effector protein 1 (CDC42EP1), found in Homo sapiens (Human).